Here is a 312-residue protein sequence, read N- to C-terminus: Ribosomal RNA small subunit methyltransferase H (312 aa).

S-adenosyl-L-methionine-binding positions include 33–35, Asp53, Phe80, Asp101, and Gln108; that span reads SGH.

It belongs to the methyltransferase superfamily. RsmH family.

Its subcellular location is the cytoplasm. It catalyses the reaction cytidine(1402) in 16S rRNA + S-adenosyl-L-methionine = N(4)-methylcytidine(1402) in 16S rRNA + S-adenosyl-L-homocysteine + H(+). Functionally, specifically methylates the N4 position of cytidine in position 1402 (C1402) of 16S rRNA. The protein is Ribosomal RNA small subunit methyltransferase H of Desulforapulum autotrophicum (strain ATCC 43914 / DSM 3382 / VKM B-1955 / HRM2) (Desulfobacterium autotrophicum).